Reading from the N-terminus, the 211-residue chain is Large ribosomal subunit protein uL4 (211 aa).

The span at 46–55 (GNHATKTRSM) shows a compositional bias: polar residues. Residues 46 to 89 (GNHATKTRSMVSGGGKKPWSQKGTGRARQGSTRAPHWVGGGTVH) form a disordered region.

Belongs to the universal ribosomal protein uL4 family. Part of the 50S ribosomal subunit.

In terms of biological role, one of the primary rRNA binding proteins, this protein initially binds near the 5'-end of the 23S rRNA. It is important during the early stages of 50S assembly. It makes multiple contacts with different domains of the 23S rRNA in the assembled 50S subunit and ribosome. Its function is as follows. Forms part of the polypeptide exit tunnel. The polypeptide is Large ribosomal subunit protein uL4 (Leptospira interrogans serogroup Icterohaemorrhagiae serovar copenhageni (strain Fiocruz L1-130)).